The sequence spans 267 residues: Glucosamine-6-phosphate deaminase (267 aa).

Aspartate 71 (proton acceptor; for enolization step) is an active-site residue. Catalysis depends on aspartate 140, which acts as the For ring-opening step. Histidine 142 (proton acceptor; for ring-opening step) is an active-site residue. Catalysis depends on glutamate 147, which acts as the For ring-opening step.

It belongs to the glucosamine/galactosamine-6-phosphate isomerase family. As to quaternary structure, homohexamer.

The protein resides in the cytoplasm. It catalyses the reaction alpha-D-glucosamine 6-phosphate + H2O = beta-D-fructose 6-phosphate + NH4(+). It functions in the pathway nucleotide-sugar biosynthesis; UDP-N-acetyl-alpha-D-glucosamine biosynthesis; alpha-D-glucosamine 6-phosphate from D-fructose 6-phosphate: step 1/1. Functionally, catalyzes the reversible conversion of alpha-D-glucosamine 6-phosphate (GlcN-6P) into beta-D-fructose 6-phosphate (Fru-6P) and ammonium ion, a regulatory reaction step in de novo uridine diphosphate-N-acetyl-alpha-D-glucosamine (UDP-GlcNAc) biosynthesis via hexosamine pathway. The polypeptide is Glucosamine-6-phosphate deaminase (Caenorhabditis elegans).